A 434-amino-acid polypeptide reads, in one-letter code: Nicotinate phosphoribosyltransferase (434 aa).

At H242 the chain carries Phosphohistidine; by autocatalysis.

The protein belongs to the NAPRTase family. In terms of processing, transiently phosphorylated on a His residue during the reaction cycle. Phosphorylation strongly increases the affinity for substrates and increases the rate of nicotinate D-ribonucleotide production. Dephosphorylation regenerates the low-affinity form of the enzyme, leading to product release.

The enzyme catalyses nicotinate + 5-phospho-alpha-D-ribose 1-diphosphate + ATP + H2O = nicotinate beta-D-ribonucleotide + ADP + phosphate + diphosphate. It functions in the pathway cofactor biosynthesis; NAD(+) biosynthesis; nicotinate D-ribonucleotide from nicotinate: step 1/1. Catalyzes the synthesis of beta-nicotinate D-ribonucleotide from nicotinate and 5-phospho-D-ribose 1-phosphate at the expense of ATP. The protein is Nicotinate phosphoribosyltransferase of Sinorhizobium fredii (strain NBRC 101917 / NGR234).